A 315-amino-acid chain; its full sequence is Secreted mono- and diacylglycerol lipase LIP2 (315 aa).

Residues 1–21 (MACFRVILYLSVIFFVQCVFA) form the signal peptide. An intrachain disulfide couples cysteine 68 to cysteine 308. An N-linked (GlcNAc...) asparagine glycan is attached at asparagine 74. The active-site Nucleophile is serine 182. The active site involves aspartate 240. An N-linked (GlcNAc...) asparagine glycan is attached at asparagine 265. The active site involves histidine 292.

The protein belongs to the AB hydrolase superfamily. Lipase family. Class 3 subfamily.

The protein localises to the secreted. It catalyses the reaction a monoacylglycerol + H2O = glycerol + a fatty acid + H(+). The enzyme catalyses a diacylglycerol + H2O = a monoacylglycerol + a fatty acid + H(+). Its function is as follows. Secreted lipase involved in Dandruff and seborrheic dermatitis (D/SD) probably via lipase-mediated breakdown of sebaceous lipids and release of irritating free fatty acids. Shows activity against monoglyceride and diglyceride substrates and generates free oleic acid from the substrates mono- and diolein. Able to cleave the oleic acid from both the 1 and the 2 position of the glycerol backbone as 1,2 isomers of diolein were converted into oleic acid and glycerol. Due to an absence of fatty acid synthase genes in Malassezia species, secretory lipases are essential for the yeast to generate free fatty acids from degradation of sebum and assimilate them as lipid sources for growth. Plays an essential role at the pathogen-host interface during disease progression. Also performs the reverse reaction to build diacylglycerols from monoacylglycerols. This chain is Secreted mono- and diacylglycerol lipase LIP2, found in Malassezia restricta (strain ATCC 96810 / NBRC 103918 / CBS 7877) (Seborrheic dermatitis infection agent).